A 168-amino-acid chain; its full sequence is Photosystem I assembly protein Ycf3 (168 aa).

TPR repeat units lie at residues Ala-35–Pro-68, Ser-72–Leu-105, and Gly-120–Asn-153.

This sequence belongs to the Ycf3 family.

It localises to the plastid. The protein localises to the chloroplast thylakoid membrane. In terms of biological role, essential for the assembly of the photosystem I (PSI) complex. May act as a chaperone-like factor to guide the assembly of the PSI subunits. The protein is Photosystem I assembly protein Ycf3 of Liriodendron tulipifera (Tuliptree).